The chain runs to 288 residues: Probable HTH-type transcriptional regulator STM3175 (288 aa).

The HTH araC/xylS-type domain maps to 14–113; the sequence is RRVCDHIERH…GQSPRRFRQS (100 aa). 2 consecutive DNA-binding regions (H-T-H motif) follow at residues 31–52 and 80–103; these read EALS…TTWS and VIDI…KTAF. The tract at residues 111 to 288 is putative effector binding domain; binds the peptide antibiotic albicidin; it reads RQSPDWLAWH…LLTDIYLPLR (178 aa).

In terms of assembly, homodimer.

Probable transcription factor. The chain is Probable HTH-type transcriptional regulator STM3175 from Salmonella typhimurium (strain LT2 / SGSC1412 / ATCC 700720).